The chain runs to 241 residues: Probable transcriptional regulatory protein LMOf2365_1554 (241 aa).

A compositionally biased stretch (polar residues) spans 1 to 14 (MSGHSKWNNIQGRK). A disordered region spans residues 1–22 (MSGHSKWNNIQGRKNAQDSKRS).

Belongs to the TACO1 family.

Its subcellular location is the cytoplasm. The polypeptide is Probable transcriptional regulatory protein LMOf2365_1554 (Listeria monocytogenes serotype 4b (strain F2365)).